The sequence spans 84 residues: MPVIKSAMKRVRTSEKAAARNRSQMSAMRTSIKAFEIAATNNAENANELLQTAYSRIDRAKSKGLIKANNAGRKKSRLAKMLSK.

Residues 1 to 25 (MPVIKSAMKRVRTSEKAAARNRSQM) are disordered.

This sequence belongs to the bacterial ribosomal protein bS20 family.

In terms of biological role, binds directly to 16S ribosomal RNA. This chain is Small ribosomal subunit protein bS20, found in Pediococcus pentosaceus (strain ATCC 25745 / CCUG 21536 / LMG 10740 / 183-1w).